The sequence spans 206 residues: Regulator of rDNA transcription 14 (206 aa).

Positions 178-206 (FVKDHRYPGLTPGLAPVGLSDEEDSSEED) are disordered. Residues Ser197, Ser202, and Ser203 each carry the phosphoserine modification. Over residues 197–206 (SDEEDSSEED) the composition is skewed to acidic residues.

It belongs to the RRT14 family.

Its subcellular location is the nucleus. The protein localises to the nucleolus. Functionally, involved in ribosome biogenesis, probably through modulation of rDNA transcription. The protein is Regulator of rDNA transcription 14 (RRT14) of Saccharomyces cerevisiae (strain RM11-1a) (Baker's yeast).